Here is a 160-residue protein sequence, read N- to C-terminus: Protein BOLA1, chloroplastic (160 aa).

Residues 1–50 (MFSSSIRLIVSGFHRTQPLKSPVNSPSVFISVPKFFNSESKSTGTGSRSV) constitute a chloroplast transit peptide. Residues 39–61 (ESKSTGTGSRSVAMSSVEKTGSD) show a composition bias toward polar residues. The interval 39–66 (ESKSTGTGSRSVAMSSVEKTGSDSGAIE) is disordered.

The protein belongs to the bolA/yrbA family. As to quaternary structure, interacts in vitro with GRXS14, GRXS15, GRXS16 and GRXS17, but not with GRXC5. Interacts in vivo only with GRXS14 and GRXS16.

It localises to the plastid. Its subcellular location is the chloroplast. Functionally, may act either alone or in interaction with glutaredoxin as a redox-regulated transcriptional regulator, or as a factor regulating Fe-S cluster biogenesis. The glutaredoxin-BOLA1 heterodimers bind a labile, oxygen sensitive iron-sulfur cluster. This is Protein BOLA1, chloroplastic from Arabidopsis thaliana (Mouse-ear cress).